A 78-amino-acid polypeptide reads, in one-letter code: Omega-conotoxin-like VnMKLT1-0111 (78 aa).

The N-terminal stretch at 1–22 (MKLTCMMIVAVLFLTAWTFVTA) is a signal peptide. The propeptide occupies 23 to 48 (DSRNGLEYLFPKAHYEMNPEASKLNK). Cystine bridges form between C52–C69, C59–C73, and C68–C77.

It belongs to the conotoxin O1 superfamily. As to expression, expressed by the venom duct.

The protein localises to the secreted. Omega-conotoxins act at presynaptic membranes, they bind and block voltage-gated calcium channels (Cav). The chain is Omega-conotoxin-like VnMKLT1-0111 from Conus ventricosus (Mediterranean cone).